The sequence spans 426 residues: MANKPDHHHHHHQSSRRLMLVLYFTSVLGIGFIAAFLCLSSSIPSVSAVFSIWVPVNRPEIQIPIIDSKIVQKRSKQSNDTKDHVRFLSAIFADIPAPELKWEEMESAPVPRLDGYSVQINNLLYVFSGYGSLDYVHSHVDVFNFTDNKWCDRFHTPKEMANSHLGIVTDGRYVYVVSGQLGPQCRGPTSRSFVLDSFTKTWLEFPSLPAPRYAPATQIWRGRLHVMGGSKENRNAVAFDHWSIAVKDGKALDEWREEVPIPRGGPHRACVVANDKLLVIGGQEGDFMAKPNSPIFKCSRRREIFNGEVYMMDEEMKWKMLPPMPKNNSHIESAWIIVNNSIVIVGGTTDWHPVTKRLVLVGEIFRFQLDTLTWSVIGRLPYRVKTAMAGFWNGYLYFTSGQRDRGPDNPQPGKVIGEMWRTKLKF.

A helical membrane pass occupies residues 18–38 (LMLVLYFTSVLGIGFIAAFLC). 5 Kelch repeats span residues 123-170 (LLYV…IVTD), 173-222 (YVYV…IWRG), 224-275 (LHVM…VAND), 276-338 (KLLV…WIIV), and 341-394 (SIVI…FWNG).

It localises to the membrane. The sequence is that of Kelch repeat-containing protein At3g27220 from Arabidopsis thaliana (Mouse-ear cress).